Consider the following 102-residue polypeptide: NADH-quinone oxidoreductase subunit K 1 (102 aa).

The next 3 helical transmembrane spans lie at 5–25, 30–50, and 65–85; these read FEHV…CVLV, LIML…AFVG, and LVIM…VVYL.

Belongs to the complex I subunit 4L family. In terms of assembly, NDH-1 is composed of 14 different subunits. Subunits NuoA, H, J, K, L, M, N constitute the membrane sector of the complex.

It localises to the cell inner membrane. The catalysed reaction is a quinone + NADH + 5 H(+)(in) = a quinol + NAD(+) + 4 H(+)(out). Its function is as follows. NDH-1 shuttles electrons from NADH, via FMN and iron-sulfur (Fe-S) centers, to quinones in the respiratory chain. The immediate electron acceptor for the enzyme in this species is believed to be ubiquinone. Couples the redox reaction to proton translocation (for every two electrons transferred, four hydrogen ions are translocated across the cytoplasmic membrane), and thus conserves the redox energy in a proton gradient. The chain is NADH-quinone oxidoreductase subunit K 1 from Geobacter metallireducens (strain ATCC 53774 / DSM 7210 / GS-15).